A 141-amino-acid chain; its full sequence is Lutropin subunit beta (141 aa).

The signal sequence occupies residues 1-18; that stretch reads MGTLQGLLLWLLLGTGGA. 6 disulfides stabilise this stretch: C29–C77, C43–C92, C46–C130, C54–C108, C58–C110, and C113–C120. N-linked (GlcNAc...) asparagine glycosylation is present at N33.

Belongs to the glycoprotein hormones subunit beta family. Heterodimer of a common alpha chain and a unique beta chain which confers biological specificity to thyrotropin, lutropin, follitropin and gonadotropin.

It is found in the secreted. Promotes spermatogenesis and ovulation by stimulating the testes and ovaries to synthesize steroids. The sequence is that of Lutropin subunit beta (LHB) from Oryctolagus cuniculus (Rabbit).